We begin with the raw amino-acid sequence, 487 residues long: Rhoptry apical surface protein 1 (487 aa).

The tract at residues 337 to 487 is disordered; sequence EVAMSGRGGH…EEEQPLLFTQ (151 aa). Basic and acidic residues-rich tracts occupy residues 385 to 399 and 454 to 475; these read DGIRGRSPRGSDRRA and EKNEEASEADERPRERTEGVEY.

As to quaternary structure, interacts with RASP2.

The protein resides in the cytoplasmic vesicle. It is found in the secretory vesicle. The protein localises to the rhoptry membrane. This chain is Rhoptry apical surface protein 1, found in Toxoplasma gondii (strain ATCC 50853 / GT1).